The sequence spans 66 residues: Large ribosomal subunit protein uL29 (66 aa).

The protein belongs to the universal ribosomal protein uL29 family.

The polypeptide is Large ribosomal subunit protein uL29 (Borrelia turicatae (strain 91E135)).